We begin with the raw amino-acid sequence, 294 residues long: MPEQGLADAFGVTEEARAKINLALHVTGQRPDGYHLLDMLVTFADCGDRLGFLPAQADAFTLSGRFGETLAGDGGANLVIRARDLLREAVGTLAFPVHIHLQKNLPVASGIGGGSADAAAALRGLMRLWGTRLPVAALATLALKLGADVPMCLESRPLIARGIGEEIEAVPDLPAFAMVLANPLKGVSTPEVFRRLKAKNNPPLTLAQTAGWLATIGAARNDLEPPAREAVPEIAAISAMLQAEGALLARMSGSGATCFGIFADMAAARDAAAALHEARPDWYFQATETVSGGM.

The active site involves lysine 19. 106-116 contacts ATP; the sequence is PVASGIGGGSA. The active site involves aspartate 148.

Belongs to the GHMP kinase family. IspE subfamily.

The catalysed reaction is 4-CDP-2-C-methyl-D-erythritol + ATP = 4-CDP-2-C-methyl-D-erythritol 2-phosphate + ADP + H(+). It participates in isoprenoid biosynthesis; isopentenyl diphosphate biosynthesis via DXP pathway; isopentenyl diphosphate from 1-deoxy-D-xylulose 5-phosphate: step 3/6. Catalyzes the phosphorylation of the position 2 hydroxy group of 4-diphosphocytidyl-2C-methyl-D-erythritol. The protein is 4-diphosphocytidyl-2-C-methyl-D-erythritol kinase of Rhizobium etli (strain ATCC 51251 / DSM 11541 / JCM 21823 / NBRC 15573 / CFN 42).